The following is a 146-amino-acid chain: Shadow of prion protein (146 aa).

Residues 1–24 form the signal peptide; sequence MRGTSAVCWSLLLLIALLSQNVTA. N94 is a glycosylation site (N-linked (GlcNAc...) asparagine). A lipid anchor (GPI-anchor amidated serine) is attached at S108. A propeptide spans 109-146 (removed in mature form); it reads GTCPLSSHLSFRLIISIGAILTCSSSSIYVSTKINLGK.

This sequence belongs to the SPRN family.

It is found in the cell membrane. Prion-like protein that has PrP(C)-like neuroprotective activity. The protein is Shadow of prion protein (sprn) of Xenopus tropicalis (Western clawed frog).